The chain runs to 645 residues: Exoribonuclease 2 (645 aa).

An RNB domain is found at Arg191–Ile517. The region spanning His563–Val645 is the S1 motif domain.

This sequence belongs to the RNR ribonuclease family. RNase II subfamily.

The protein resides in the cytoplasm. The catalysed reaction is Exonucleolytic cleavage in the 3'- to 5'-direction to yield nucleoside 5'-phosphates.. Involved in mRNA degradation. Hydrolyzes single-stranded polyribonucleotides processively in the 3' to 5' direction. The sequence is that of Exoribonuclease 2 from Baumannia cicadellinicola subsp. Homalodisca coagulata.